A 329-amino-acid chain; its full sequence is tRNA dimethylallyltransferase (329 aa).

24 to 31 (GSTGIGKT) is an ATP binding site. 26 to 31 (TGIGKT) lines the substrate pocket. An interaction with substrate tRNA region spans residues 49–52 (DSMQ).

The protein belongs to the IPP transferase family. Monomer. Mg(2+) is required as a cofactor.

It carries out the reaction adenosine(37) in tRNA + dimethylallyl diphosphate = N(6)-dimethylallyladenosine(37) in tRNA + diphosphate. Functionally, catalyzes the transfer of a dimethylallyl group onto the adenine at position 37 in tRNAs that read codons beginning with uridine, leading to the formation of N6-(dimethylallyl)adenosine (i(6)A). In Methylacidiphilum infernorum (isolate V4) (Methylokorus infernorum (strain V4)), this protein is tRNA dimethylallyltransferase.